The primary structure comprises 1214 residues: MRAGRCAAALLLLLLSGAGRAIGSEDIVVGCGGFVKSDVEINYSLIEIKLYTKHGTLKYQTDCAPNNGYFMIPLYDKGDFILKIEPPLGWSFEPTNVELRVDGVSDICTKGGDINFLFTGFSVNGKVLSKGQPLGPAGVQVSLRSTGADSKIQSTVTQPGGKFAFFKVLPGDYEILATHPTWALKEASTTVRVTNSNANAAGPLIVAGYNVSGSVRSDGEPMKGVKFLLFSSLVNKEDVLGCNVSPVSGFQPPDESLVYLCYAVSKEDGSFSFYSLPSGGYTVVPFYRGERITFDVAPSRLDFTVEHDSLRIEPVFHVMGFSVTGRVLNGPDGEGVPEAVVTLNNQIKVKTKADGSFRLENITTGTYTIHAQKEHLYFEMVTIKIAPNTPQLADLIATGFSICGQIAIVRSPDTIKQMSKYRVVLSSQDKDKALLTVDSDAHGSFCFKAKPGAYKVQVVVPEAETRAGLMLKPQVFPLTVTNRPVMDVAFVQFLASVSGKVSCLDTCGDLLVTLQSLSRQGEKRSLQLSGKVNSMTFTFDKVLPGRYKISIMHEDWCWRNKSLEVEVLEDDVSAVEFRQTGYMLRCALSHAITLEFHQDGNGPENVGIYNLSRGVNRFCLSKPGVYKVTPRSCHRFEQAFYTYDTSSPSILTLTAIRHHVLGTIITDKMMDVTVTIKSSIDSEPALVLGPLKSAQELRREQQLAEIETRRQEREKNGKEEGEEGRARPPGQEMVDELQGPFSYDFSYWARSGEKITVTPSSKELLFYPPSMEATVSGESCPGKLIEIHGKAGLFLEGQIHPELEGVEIVISEKGASSPLITVFTDDKGAYSVGPLHSDLEYTVNSQKEGYVLTAVEGTVGDFKAYALAGVSFEIKAEDDQPLPGVLLSLSGGVFRSNLLTQDNGILTFSNLSPGQYYFKPMMKEFRFEPSSQMIEVQEGQNLRITITGFRTAYSCYGTVSSLNGEPEQGVAVEAVGQKDCSIYGEDTVTDEEGKFRLRGLLPGCMYHVQLKAEGNDHIERALPHHRVIEVGNNDVDDVNIIVFRQINQFDLSGNVITSSEYLSTLWVKLYKSESLDNPIQTVSLGQSLFFHFPPLLRDGENYVVLLDTTLPRSQYDYVLPQVSFTAVGYHKHITLVFSPTRKLPEQDIAQGSYIALPLTLLLLLAGYNHDKLIPLLLQLTSRLQGVRALGQAASDSSGPEDMKRQTKKQKTRRT.

Positions 1–23 (MRAGRCAAALLLLLLSGAGRAIG) are cleaved as a signal peptide. Topologically, residues 24–1150 (SEDIVVGCGG…RKLPEQDIAQ (1127 aa)) are extracellular. Asparagine 42, asparagine 210, and asparagine 610 each carry an N-linked (GlcNAc...) asparagine glycan. Residues 692–720 (KSAQELRREQQLAEIETRRQEREKNGKEE) are a coiled coil. Residues 708-726 (TRRQEREKNGKEEGEEGRA) are compositionally biased toward basic and acidic residues. Residues 708-733 (TRRQEREKNGKEEGEEGRARPPGQEM) are disordered. A helical transmembrane segment spans residues 1151-1167 (GSYIALPLTLLLLLAGY). Residues 1168–1214 (NHDKLIPLLLQLTSRLQGVRALGQAASDSSGPEDMKRQTKKQKTRRT) lie on the Cytoplasmic side of the membrane. The segment at 1190–1214 (GQAASDSSGPEDMKRQTKKQKTRRT) is disordered. Phosphoserine is present on residues serine 1196 and serine 1197. Basic residues predominate over residues 1205–1214 (QTKKQKTRRT).

In terms of assembly, component of the back of Sec61 (BOS) complex, composed of NCLN/Nicalin, NOMO (NOMO1, NOMO2 or NOMO3) and TMEM147. The BOS complex is part of the multi-pass translocon (MPT) complex, composed of three subcomplexes, the GEL complex (composed of RAB5IF/OPTI and TMCO1), the BOS complex (composed of NCLN/Nicalin, NOMO and TMEM147) and the PAT complex (composed of WDR83OS/Asterix and CCDC47). The MPT complex associates with the SEC61 complex.

Its subcellular location is the endoplasmic reticulum membrane. Component of the multi-pass translocon (MPT) complex that mediates insertion of multi-pass membrane proteins into the lipid bilayer of membranes. The MPT complex takes over after the SEC61 complex: following membrane insertion of the first few transmembrane segments of proteins by the SEC61 complex, the MPT complex occludes the lateral gate of the SEC61 complex to promote insertion of subsequent transmembrane regions. This chain is BOS complex subunit NOMO1, found in Mus musculus (Mouse).